Reading from the N-terminus, the 302-residue chain is NAD kinase (302 aa).

D79 functions as the Proton acceptor in the catalytic mechanism. NAD(+) is bound by residues 79–80 (DG), 153–154 (ND), R181, D183, 194–199 (TAYALS), A218, and Q252.

This sequence belongs to the NAD kinase family. It depends on a divalent metal cation as a cofactor.

Its subcellular location is the cytoplasm. It carries out the reaction NAD(+) + ATP = ADP + NADP(+) + H(+). Involved in the regulation of the intracellular balance of NAD and NADP, and is a key enzyme in the biosynthesis of NADP. Catalyzes specifically the phosphorylation on 2'-hydroxyl of the adenosine moiety of NAD to yield NADP. This is NAD kinase from Ralstonia nicotianae (strain ATCC BAA-1114 / GMI1000) (Ralstonia solanacearum).